The following is a 563-amino-acid chain: Arginine--tRNA ligase (563 aa).

Positions 121-131 (PNIAKPFSIGH) match the 'HIGH' region motif.

Belongs to the class-I aminoacyl-tRNA synthetase family. Monomer.

The protein localises to the cytoplasm. The enzyme catalyses tRNA(Arg) + L-arginine + ATP = L-arginyl-tRNA(Arg) + AMP + diphosphate. The chain is Arginine--tRNA ligase from Streptococcus agalactiae serotype III (strain NEM316).